Here is a 353-residue protein sequence, read N- to C-terminus: MFPSLQSFAKKVLARQHVSIDYHVILERCGLWWYKAPISLDCKHMLIKLPSFADGLDLNTALMLATKENNYQLIKLFTEWGADINYGLICANTPPVRELCWELGAKYRVDKKKIMHMFFKLIHPGTTSSNIILCLKLFNDNPFSAYVIIREIKSSIYWKLKKLVEDTDVLSNISDGDMLTIYCFMVALQDNLREAISYVYQHFKYLNTWWLICALCFNKLFDLHNLYEKEKIRMDMDEMMRIACTKDNNFLTIYYCFILGANINLAMIASIRFYNMDNLFFCIDLGADAFEEAKALAEQRNYFLISHRLSLDIYSPDSSLLTLKEADPNKIYHLLKNYKSKNMTAYFNHDDTI.

Residues aspartate 57 to isoleucine 89 form an ANK repeat. Residue asparagine 172 is glycosylated (N-linked (GlcNAc...) asparagine; by host). 2 helical membrane passes run leucine 206 to glutamate 228 and asparagine 249 to isoleucine 271. An N-linked (GlcNAc...) asparagine; by host glycan is attached at asparagine 342.

The protein belongs to the asfivirus MGF 360 family.

The protein resides in the host membrane. Functionally, plays a role in virus cell tropism, and may be required for efficient virus replication in macrophages. This chain is Protein MGF 360-10L, found in African swine fever virus (isolate Warthog/Namibia/Wart80/1980) (ASFV).